A 632-amino-acid chain; its full sequence is tRNA uridine 5-carboxymethylaminomethyl modification enzyme MnmG (632 aa).

FAD contacts are provided by residues 15-20 (GAGHAG), Val127, and Ser182. The disordered stretch occupies residues 203–226 (TPPRVKSSTIDYSKTEEQPGDDHP). Residues 215-226 (SKTEEQPGDDHP) show a composition bias toward basic and acidic residues. 274-288 (GARYCPSIEDKIVRF) is an NAD(+) binding site. Gln371 lines the FAD pocket.

This sequence belongs to the MnmG family. In terms of assembly, homodimer. Heterotetramer of two MnmE and two MnmG subunits. FAD is required as a cofactor.

It localises to the cytoplasm. Its function is as follows. NAD-binding protein involved in the addition of a carboxymethylaminomethyl (cmnm) group at the wobble position (U34) of certain tRNAs, forming tRNA-cmnm(5)s(2)U34. The sequence is that of tRNA uridine 5-carboxymethylaminomethyl modification enzyme MnmG from Listeria monocytogenes serotype 4b (strain F2365).